The following is a 1177-amino-acid chain: DNA-directed RNA polymerase subunit beta (1177 aa).

A compositionally biased stretch (acidic residues) spans 1147-1161 (DDTEIEMRDTEDDDD). Residues 1147 to 1177 (DDTEIEMRDTEDDDDHQSADKLNVEVETTKE) form a disordered region. Residues 1162-1177 (HQSADKLNVEVETTKE) are compositionally biased toward basic and acidic residues.

The protein belongs to the RNA polymerase beta chain family. In terms of assembly, the RNAP catalytic core consists of 2 alpha, 1 beta, 1 beta' and 1 omega subunit. When a sigma factor is associated with the core the holoenzyme is formed, which can initiate transcription.

It catalyses the reaction RNA(n) + a ribonucleoside 5'-triphosphate = RNA(n+1) + diphosphate. In terms of biological role, DNA-dependent RNA polymerase catalyzes the transcription of DNA into RNA using the four ribonucleoside triphosphates as substrates. The sequence is that of DNA-directed RNA polymerase subunit beta from Bacillus cereus (strain G9842).